The following is a 1185-amino-acid chain: Chromosome partition protein Smc (1185 aa).

ATP is bound at residue 34–41 (PNGSGKSN). Coiled-coil stretches lie at residues 174 to 376 (WRRS…EKDI) and 412 to 526 (ENIV…KLDV). An SMC hinge domain is found at 534 to 644 (VGEIISLQKK…CENIDNAFEI (111 aa)). Residues 679 to 1039 (NIIGRKREIE…IDAMTEKMKG (361 aa)) adopt a coiled-coil conformation.

Belongs to the SMC family. As to quaternary structure, homodimer.

It is found in the cytoplasm. Functionally, required for chromosome condensation and partitioning. The polypeptide is Chromosome partition protein Smc (Clostridium kluyveri (strain NBRC 12016)).